Reading from the N-terminus, the 240-residue chain is Phosphatidylserine decarboxylase proenzyme (240 aa).

Ser-209 functions as the Schiff-base intermediate with substrate; via pyruvic acid in the catalytic mechanism. Ser-209 is modified (pyruvic acid (Ser); by autocatalysis).

Belongs to the phosphatidylserine decarboxylase family. PSD-A subfamily. As to quaternary structure, heterodimer of a large membrane-associated beta subunit and a small pyruvoyl-containing alpha subunit. The cofactor is pyruvate. In terms of processing, is synthesized initially as an inactive proenzyme. Formation of the active enzyme involves a self-maturation process in which the active site pyruvoyl group is generated from an internal serine residue via an autocatalytic post-translational modification. Two non-identical subunits are generated from the proenzyme in this reaction, and the pyruvate is formed at the N-terminus of the alpha chain, which is derived from the carboxyl end of the proenzyme. The post-translation cleavage follows an unusual pathway, termed non-hydrolytic serinolysis, in which the side chain hydroxyl group of the serine supplies its oxygen atom to form the C-terminus of the beta chain, while the remainder of the serine residue undergoes an oxidative deamination to produce ammonia and the pyruvoyl prosthetic group on the alpha chain.

It is found in the cell membrane. It carries out the reaction a 1,2-diacyl-sn-glycero-3-phospho-L-serine + H(+) = a 1,2-diacyl-sn-glycero-3-phosphoethanolamine + CO2. It functions in the pathway phospholipid metabolism; phosphatidylethanolamine biosynthesis; phosphatidylethanolamine from CDP-diacylglycerol: step 2/2. Functionally, catalyzes the formation of phosphatidylethanolamine (PtdEtn) from phosphatidylserine (PtdSer). The sequence is that of Phosphatidylserine decarboxylase proenzyme from Mycobacterium ulcerans (strain Agy99).